A 519-amino-acid polypeptide reads, in one-letter code: Histidine ammonia-lyase (519 aa).

The 5-imidazolinone (Ala-Gly) cross-link spans 146–148 (ASG). S147 is modified (2,3-didehydroalanine (Ser)).

It belongs to the PAL/histidase family. In terms of processing, contains an active site 4-methylidene-imidazol-5-one (MIO), which is formed autocatalytically by cyclization and dehydration of residues Ala-Ser-Gly.

It localises to the cytoplasm. The catalysed reaction is L-histidine = trans-urocanate + NH4(+). It functions in the pathway amino-acid degradation; L-histidine degradation into L-glutamate; N-formimidoyl-L-glutamate from L-histidine: step 1/3. This is Histidine ammonia-lyase from Psychrobacter sp. (strain PRwf-1).